The sequence spans 631 residues: Phosphomethylpyrimidine synthase (631 aa).

Substrate-binding positions include Asn239, Met268, Tyr297, His333, Ser353 to Gly355, Asp394 to Arg397, and Glu433. His437 is a binding site for Zn(2+). Tyr460 lines the substrate pocket. Position 501 (His501) interacts with Zn(2+). The [4Fe-4S] cluster site is built by Cys581, Cys584, and Cys589.

This sequence belongs to the ThiC family. In terms of assembly, homodimer. It depends on [4Fe-4S] cluster as a cofactor.

The enzyme catalyses 5-amino-1-(5-phospho-beta-D-ribosyl)imidazole + S-adenosyl-L-methionine = 4-amino-2-methyl-5-(phosphooxymethyl)pyrimidine + CO + 5'-deoxyadenosine + formate + L-methionine + 3 H(+). It functions in the pathway cofactor biosynthesis; thiamine diphosphate biosynthesis. Functionally, catalyzes the synthesis of the hydroxymethylpyrimidine phosphate (HMP-P) moiety of thiamine from aminoimidazole ribotide (AIR) in a radical S-adenosyl-L-methionine (SAM)-dependent reaction. The chain is Phosphomethylpyrimidine synthase from Escherichia coli O45:K1 (strain S88 / ExPEC).